The chain runs to 316 residues: Transcription factor MafB (316 aa).

2 disordered regions span residues 40 to 78 (PDRA…SPTE) and 116 to 204 (HQMP…EDRF). Residues 55 to 77 (SVSSTPISTPCSSVPSSPSFSPT) are compositionally biased toward low complexity. Composition is skewed to basic residues over residues 130–144 (GHHH…HQNH) and 160–172 (QHPH…HHHQ). Low complexity predominate over residues 177–198 (PSGSSSSSQQLQNSHQQHQNSS). The interval 231 to 256 (RLKQKRRTLKNRGYAQSCRFKRVQQK) is basic motif. Positions 231–294 (RLKQKRRTLK…DAYKIKCEKL (64 aa)) constitute a bZIP domain. Residues 259 to 280 (LENEKTQLIQQVEQLKLEVSRL) are leucine-zipper.

The protein belongs to the bZIP family. Maf subfamily. In terms of assembly, homodimer or heterodimer with other bHLH-Zip transcription factors. Binds DNA as a homodimer or a heterodimer.

Its subcellular location is the nucleus. Its function is as follows. Acts as a transcriptional activator or repressor. Implicated in the regulation of cell-type specific gene expression and play a role in inductive events during lens development. The sequence is that of Transcription factor MafB (mafb) from Xenopus tropicalis (Western clawed frog).